Here is a 573-residue protein sequence, read N- to C-terminus: Methionine--tRNA ligase (573 aa).

The short motif at 10–20 (PYVNSVPHLGN) is the 'HIGH' region element. Zn(2+) contacts are provided by cysteine 143, cysteine 146, cysteine 156, and cysteine 159. Positions 333–337 (KFSKS) match the 'KMSKS' region motif. Lysine 336 is a binding site for ATP.

It belongs to the class-I aminoacyl-tRNA synthetase family. MetG type 1 subfamily. Zn(2+) serves as cofactor.

It is found in the cytoplasm. It catalyses the reaction tRNA(Met) + L-methionine + ATP = L-methionyl-tRNA(Met) + AMP + diphosphate. Functionally, is required not only for elongation of protein synthesis but also for the initiation of all mRNA translation through initiator tRNA(fMet) aminoacylation. This is Methionine--tRNA ligase from Saccharolobus islandicus (strain M.14.25 / Kamchatka #1) (Sulfolobus islandicus).